Consider the following 356-residue polypeptide: DNA polymerase IV (356 aa).

Residues 7 to 187 (IIHVDMDAFY…LPVNRVPGVG (181 aa)) form the UmuC domain. Mg(2+)-binding residues include Asp-11 and Asp-105. Glu-106 is a catalytic residue.

It belongs to the DNA polymerase type-Y family. Monomer. Requires Mg(2+) as cofactor.

Its subcellular location is the cytoplasm. The enzyme catalyses DNA(n) + a 2'-deoxyribonucleoside 5'-triphosphate = DNA(n+1) + diphosphate. Poorly processive, error-prone DNA polymerase involved in untargeted mutagenesis. Copies undamaged DNA at stalled replication forks, which arise in vivo from mismatched or misaligned primer ends. These misaligned primers can be extended by PolIV. Exhibits no 3'-5' exonuclease (proofreading) activity. May be involved in translesional synthesis, in conjunction with the beta clamp from PolIII. The polypeptide is DNA polymerase IV (Stenotrophomonas maltophilia (strain R551-3)).